Reading from the N-terminus, the 211-residue chain is PDR1 up-regulated protein 1 (211 aa).

Transmembrane regions (helical) follow at residues 45 to 67 and 82 to 99; these read ISKA…PYAY and RTIL…NVAA.

This sequence belongs to the PUP1 family.

It localises to the mitochondrion membrane. Its function is as follows. Mitochondrial protein that contributes to the enhanced virulence of C.glabrata strains that acquired azole resistance. In Candida glabrata (strain ATCC 2001 / BCRC 20586 / JCM 3761 / NBRC 0622 / NRRL Y-65 / CBS 138) (Yeast), this protein is PDR1 up-regulated protein 1.